The primary structure comprises 192 residues: Lumican (192 aa).

9 LRR repeats span residues 1 to 23, 26 to 46, 47 to 68, 69 to 90, 94 to 114, 115 to 136, 139 to 162, 164 to 185, and 186 to 192; these read LQWLILDHNLLENSKIKGKVFSK, QLKKLHINHNNLTESVGPLPK, SLEDLQLTHNKITKLGSFDGLL, NLTFVHLQHNQLKEDAVSAAFK, SLEYLDLSFNQMSKLPSGLPA, SLLTLYLDNNKISDIPDEYFKR, GLQYLRLSHNELADSGIPGNSFNI, SLVELDLSYNKLKNIPTVNENL, and ENYYLEV.

Belongs to the small leucine-rich proteoglycan (SLRP) family. SLRP class II subfamily. As to quaternary structure, binds to laminin. Post-translationally, sulfated on tyrosine residue(s). In terms of processing, contains keratan sulfate.

It is found in the secreted. It localises to the extracellular space. Its subcellular location is the extracellular matrix. This chain is Lumican (LUM), found in Oryctolagus cuniculus (Rabbit).